A 543-amino-acid polypeptide reads, in one-letter code: uncharacterized protein (543 aa).

Residues 1–59 form the TRAM domain; the sequence is MLKKNDIVEVEIVDLTHEGAGVAKVDGLVFFVENALPSEKILMRVLKVNKKIGFGKVEK. S-adenosyl-L-methionine is bound by residues Gln-283, Tyr-312, Glu-333, and Asp-381. Residue Cys-408 is the Nucleophile of the active site.

It belongs to the class I-like SAM-binding methyltransferase superfamily. RNA M5U methyltransferase family.

This is an uncharacterized protein from Streptococcus pneumoniae (strain ATCC BAA-255 / R6).